An 819-amino-acid polypeptide reads, in one-letter code: Zinc finger protein with KRAB and SCAN domains 5 (819 aa).

The region spanning 51–132 is the SCAN box domain; it reads QRFKHFQYHE…AVIESIQREL (82 aa). Glycyl lysine isopeptide (Lys-Gly) (interchain with G-Cter in SUMO2) cross-links involve residues Lys-214, Lys-246, and Lys-302. One can recognise a KRAB domain in the interval 216 to 287; the sequence is EDVADVAVSF…HWVAAERTEK (72 aa). Disordered regions lie at residues 236–263 and 283–340; these read SQKS…KEGN and ERTE…GERG. Over residues 240-249 the composition is skewed to basic and acidic residues; it reads LGRDSRKEDC. A compositionally biased stretch (basic and acidic residues) spans 329 to 340; the sequence is VNRKQKSNGERG. C2H2-type zinc fingers lie at residues 341–363, 369–391, 397–419, 425–447, 540–562, 568–590, 596–618, 624–646, and 652–674; these read HRCG…RRIH, FKCG…QRVH, YKCQ…HSVH, YGCN…LKRH, HQCN…RRIH, FRCE…HRVH, YACH…QSVH, FKCN…LRLH, and HQCH…QVLH. Lys-700 is covalently cross-linked (Glycyl lysine isopeptide (Lys-Gly) (interchain with G-Cter in SUMO2)). 3 consecutive C2H2-type zinc fingers follow at residues 708–730, 764–786, and 792–814; these read YQCD…YRTH, HQCN…QRIH, and LQCK…LRSH. A Glycyl lysine isopeptide (Lys-Gly) (interchain with G-Cter in SUMO2) cross-link involves residue Lys-776.

The protein belongs to the krueppel C2H2-type zinc-finger protein family. As to expression, testis specific.

The protein localises to the nucleus. Functionally, may be involved in transcriptional regulation. The chain is Zinc finger protein with KRAB and SCAN domains 5 (Zkscan5) from Mus musculus (Mouse).